The sequence spans 188 residues: Large ribosomal subunit protein bL35m (188 aa).

It belongs to the bacterial ribosomal protein bL35 family.

Its subcellular location is the mitochondrion. The polypeptide is Large ribosomal subunit protein bL35m (MRPL35) (Pongo abelii (Sumatran orangutan)).